We begin with the raw amino-acid sequence, 461 residues long: Argininosuccinate lyase (461 aa).

It belongs to the lyase 1 family. Argininosuccinate lyase subfamily.

The protein resides in the cytoplasm. The catalysed reaction is 2-(N(omega)-L-arginino)succinate = fumarate + L-arginine. It functions in the pathway amino-acid biosynthesis; L-arginine biosynthesis; L-arginine from L-ornithine and carbamoyl phosphate: step 3/3. Its activity is regulated as follows. Strongly inhibited by L-arginine. Inhibitory effects are lowered at pH 7.0 compared to those at pH 8.0. At 45 degrees Celsius and pH 8.0, activity decreases to 94%, 74% and 37% in the presence of 0.6 mM, 2.8 mM and 10 mM arginine, respectively. Activity also decreases to 86% in the presence of 10 mM sodium succinate or sodium citrate. Activity does not decrease in the presence of 1 mM or 10 mM L-lysine, which has a similar structure to arginine. In terms of biological role, catalyzes the last step of arginine biosynthesis, the conversion of argininosuccinate into L-arginine and fumarate. The sequence is that of Argininosuccinate lyase from Synechocystis sp. (strain ATCC 27184 / PCC 6803 / Kazusa).